The sequence spans 437 residues: Phosphomethylpyrimidine synthase (437 aa).

Residues N69, M98, Y127, H163, S185–G187, D226–R229, and E265 each bind substrate. H269 contacts Zn(2+). Y292 is a binding site for substrate. H333 is a Zn(2+) binding site. [4Fe-4S] cluster contacts are provided by C409, C412, and C416.

Belongs to the ThiC family. Requires [4Fe-4S] cluster as cofactor.

It catalyses the reaction 5-amino-1-(5-phospho-beta-D-ribosyl)imidazole + S-adenosyl-L-methionine = 4-amino-2-methyl-5-(phosphooxymethyl)pyrimidine + CO + 5'-deoxyadenosine + formate + L-methionine + 3 H(+). Its pathway is cofactor biosynthesis; thiamine diphosphate biosynthesis. In terms of biological role, catalyzes the synthesis of the hydroxymethylpyrimidine phosphate (HMP-P) moiety of thiamine from aminoimidazole ribotide (AIR) in a radical S-adenosyl-L-methionine (SAM)-dependent reaction. This chain is Phosphomethylpyrimidine synthase, found in Clostridium botulinum (strain Loch Maree / Type A3).